Reading from the N-terminus, the 612-residue chain is Dihydroxy-acid dehydratase (612 aa).

D81 provides a ligand contact to Mg(2+). C122 provides a ligand contact to [2Fe-2S] cluster. Residues D123 and K124 each contribute to the Mg(2+) site. K124 carries the post-translational modification N6-carboxylysine. C195 provides a ligand contact to [2Fe-2S] cluster. Position 491 (E491) interacts with Mg(2+). S517 (proton acceptor) is an active-site residue.

Belongs to the IlvD/Edd family. In terms of assembly, homodimer. [2Fe-2S] cluster serves as cofactor. It depends on Mg(2+) as a cofactor.

It carries out the reaction (2R)-2,3-dihydroxy-3-methylbutanoate = 3-methyl-2-oxobutanoate + H2O. It catalyses the reaction (2R,3R)-2,3-dihydroxy-3-methylpentanoate = (S)-3-methyl-2-oxopentanoate + H2O. Its pathway is amino-acid biosynthesis; L-isoleucine biosynthesis; L-isoleucine from 2-oxobutanoate: step 3/4. It participates in amino-acid biosynthesis; L-valine biosynthesis; L-valine from pyruvate: step 3/4. Functions in the biosynthesis of branched-chain amino acids. Catalyzes the dehydration of (2R,3R)-2,3-dihydroxy-3-methylpentanoate (2,3-dihydroxy-3-methylvalerate) into 2-oxo-3-methylpentanoate (2-oxo-3-methylvalerate) and of (2R)-2,3-dihydroxy-3-methylbutanoate (2,3-dihydroxyisovalerate) into 2-oxo-3-methylbutanoate (2-oxoisovalerate), the penultimate precursor to L-isoleucine and L-valine, respectively. This Rhizobium meliloti (strain 1021) (Ensifer meliloti) protein is Dihydroxy-acid dehydratase.